The following is a 278-amino-acid chain: Large ribosomal subunit protein uL2 (278 aa).

Disordered stretches follow at residues 1-58 (MGIR…GGGH) and 210-278 (GRMR…GKKR). The segment covering 23–33 (EVTRSEPEKSL) has biased composition (basic and acidic residues). Residues 40–49 (SGGRNSTGRI) show a composition bias toward low complexity. Basic residues-rich tracts occupy residues 210 to 220 (GRMRWKGKRPS) and 269 to 278 (VRRRRTGKKR).

This sequence belongs to the universal ribosomal protein uL2 family. As to quaternary structure, part of the 50S ribosomal subunit. Forms a bridge to the 30S subunit in the 70S ribosome.

One of the primary rRNA binding proteins. Required for association of the 30S and 50S subunits to form the 70S ribosome, for tRNA binding and peptide bond formation. It has been suggested to have peptidyltransferase activity; this is somewhat controversial. Makes several contacts with the 16S rRNA in the 70S ribosome. The chain is Large ribosomal subunit protein uL2 from Beutenbergia cavernae (strain ATCC BAA-8 / DSM 12333 / CCUG 43141 / JCM 11478 / NBRC 16432 / NCIMB 13614 / HKI 0122).